Consider the following 858-residue polypeptide: MKAIDSQDLEKHTPMMRQYLTLKAENPDVLLFYRMGDFYELFYDDAKKASELLGISLTARGKSGGDPIPMAGLPYHAVEGYLAKLVQLRVSVAICEQVGDPATSKGPVERKVVRLVTPGTLTDEALLQERQDNLLAAVYHGKKGFGYATLDISSGRFVIAELESCEALEAELQRTSPAELLYSEDFSEMSLISAFEGTRRRPEWEFDFDTSQKLLLDQFGTKDLQGFGLDGARLSLQAAGCLMQYVKDTQRTALPHINSIVRFNQGDSIILDAATRRNLELTMNLQGGHSNTLATVLDNTTTPMGSRMLQRWIHEPLRDRQRIEARQSALEEILENGLYDELHPLLKSLGDVERITARLALRNARPRDFSRLKHALAILPEIQQILARCQSAHLQSLARIISEFPEELALLDSAIVDNPPMLIRDGGVLKPGYNAELDQWRDLSQGATDYLAELEAREKEATGISTLKVGYNRVHGYYIEVSRRESDLVPLSYQRRQTLKNTERYIVAELKEHEEKVLSSQGKALALEKQLWDQLFDLILPQLHELQLFAQGAAELDVLANFAERADTLNYQRPVLTDIPGIQIESGRHPVIEQVSQTPFIANPVTLSPARKMLIVTGPNMGGKSTYMRQVALITLMAHIGCYVPAQSATIGPVDRIFTRIGAADDLASGRSTFMVEMTETANILHNATPKSLVLMDEIGRGTSTYDGLSLAWSAAEYLAQKIEAMTLFATHYFELTQLPELISNVANVHLDAIEHGDTIVFMHAVQDGAASKSYGLQVAALAGVPNPVILAAKHKLHHLESRDNHNTQQTDSSGVQQSMVFPDPIKSPLEEAMESIRPDELSPKQALDILYRLKDLS.

Residue 618–625 (GPNMGGKS) participates in ATP binding.

Belongs to the DNA mismatch repair MutS family.

Functionally, this protein is involved in the repair of mismatches in DNA. It is possible that it carries out the mismatch recognition step. This protein has a weak ATPase activity. The polypeptide is DNA mismatch repair protein MutS (Shewanella woodyi (strain ATCC 51908 / MS32)).